A 133-amino-acid chain; its full sequence is Ribosome-binding factor A (133 aa).

The protein belongs to the RbfA family. In terms of assembly, monomer. Binds 30S ribosomal subunits, but not 50S ribosomal subunits or 70S ribosomes.

The protein resides in the cytoplasm. One of several proteins that assist in the late maturation steps of the functional core of the 30S ribosomal subunit. Associates with free 30S ribosomal subunits (but not with 30S subunits that are part of 70S ribosomes or polysomes). Required for efficient processing of 16S rRNA. May interact with the 5'-terminal helix region of 16S rRNA. This chain is Ribosome-binding factor A, found in Trichormus variabilis (strain ATCC 29413 / PCC 7937) (Anabaena variabilis).